We begin with the raw amino-acid sequence, 382 residues long: Methenyltetrahydrofolate synthase domain-containing protein (382 aa).

Positions 306–382 constitute an RRM domain; it reads TTVYLSDIPP…QAKCVSSQKM (77 aa).

The polypeptide is Methenyltetrahydrofolate synthase domain-containing protein (mthfsd) (Danio rerio (Zebrafish)).